Reading from the N-terminus, the 612-residue chain is Sulfite reductase [NADPH] flavoprotein alpha-component (612 aa).

The 139-residue stretch at 64-202 (VTLISASQTG…QAQQWRQQVV (139 aa)) folds into the Flavodoxin-like domain. FMN is bound by residues 70–75 (SQTGNA), 117–120 (STQG), and 153–162 (LGDTSYEHFC). The FAD-binding FR-type domain maps to 247–461 (TAPLTAQLSV…IEHNDNFRLP (215 aa)). FAD is bound by residues threonine 335, lysine 369, 399 to 402 (RLYS), 417 to 419 (TVG), tyrosine 423, and 432 to 435 (GGAS). Residues 532–533 (SR), 538–542 (KIYVQ), and aspartate 574 each bind NADP(+). Position 612 (tyrosine 612) interacts with FAD.

It belongs to the NADPH-dependent sulphite reductase flavoprotein subunit CysJ family. In the N-terminal section; belongs to the flavodoxin family. The protein in the C-terminal section; belongs to the flavoprotein pyridine nucleotide cytochrome reductase family. In terms of assembly, alpha(8)-beta(8). The alpha component is a flavoprotein, the beta component is a hemoprotein. It depends on FAD as a cofactor. Requires FMN as cofactor.

It carries out the reaction hydrogen sulfide + 3 NADP(+) + 3 H2O = sulfite + 3 NADPH + 4 H(+). The protein operates within sulfur metabolism; hydrogen sulfide biosynthesis; hydrogen sulfide from sulfite (NADPH route): step 1/1. In terms of biological role, component of the sulfite reductase complex that catalyzes the 6-electron reduction of sulfite to sulfide. This is one of several activities required for the biosynthesis of L-cysteine from sulfate. The flavoprotein component catalyzes the electron flow from NADPH -&gt; FAD -&gt; FMN to the hemoprotein component. The protein is Sulfite reductase [NADPH] flavoprotein alpha-component of Yersinia pseudotuberculosis serotype O:1b (strain IP 31758).